Reading from the N-terminus, the 264-residue chain is MGQKIHPTGFRLAVSRNWASRWYANNNNFAAMLQEDIGVREYLKKKLKNASVGRVVIERPAKNARITIFSSRPGVVIGKKGEDIELLKSELQKRMGVPVHVNIEEIRKPETDAQLIADSITQQLERRIMFRRAMKRAMQNAMRLGAQGIKIMSAGRLNGIEIARTEWYREGRVPLHTLRADIDYATSEAKTTYGIIGVKVWVYKGDTLGRNDAPVVEEVAEEKRPRRNARPGDRRPRRDGEGAPAGARRGAPRRGGAGDGKTGE.

The region spanning 39–107 is the KH type-2 domain; sequence VREYLKKKLK…PVHVNIEEIR (69 aa). The interval 217–264 is disordered; the sequence is EEVAEEKRPRRNARPGDRRPRRDGEGAPAGARRGAPRRGGAGDGKTGE. Basic and acidic residues predominate over residues 230-241; that stretch reads RPGDRRPRRDGE. Over residues 253–264 the composition is skewed to gly residues; it reads RRGGAGDGKTGE.

This sequence belongs to the universal ribosomal protein uS3 family. Part of the 30S ribosomal subunit. Forms a tight complex with proteins S10 and S14.

Functionally, binds the lower part of the 30S subunit head. Binds mRNA in the 70S ribosome, positioning it for translation. The sequence is that of Small ribosomal subunit protein uS3 from Paraburkholderia phymatum (strain DSM 17167 / CIP 108236 / LMG 21445 / STM815) (Burkholderia phymatum).